We begin with the raw amino-acid sequence, 327 residues long: Putative hydroxymethylpyrimidine/phosphomethylpyrimidine kinase C18B5.05c (327 aa).

A 4-amino-5-hydroxymethyl-2-methylpyrimidine-binding site is contributed by Q54.

Belongs to the ThiD family.

The protein localises to the cytoplasm. The protein resides in the nucleus. It catalyses the reaction 4-amino-5-hydroxymethyl-2-methylpyrimidine + ATP = 4-amino-2-methyl-5-(phosphooxymethyl)pyrimidine + ADP + H(+). The catalysed reaction is 4-amino-2-methyl-5-(phosphooxymethyl)pyrimidine + ATP = 4-amino-2-methyl-5-(diphosphooxymethyl)pyrimidine + ADP. It participates in cofactor biosynthesis; thiamine diphosphate biosynthesis; 4-amino-2-methyl-5-diphosphomethylpyrimidine from 5-amino-1-(5-phospho-D-ribosyl)imidazole: step 2/3. It functions in the pathway cofactor biosynthesis; thiamine diphosphate biosynthesis; 4-amino-2-methyl-5-diphosphomethylpyrimidine from 5-amino-1-(5-phospho-D-ribosyl)imidazole: step 3/3. In terms of biological role, catalyzes the phosphorylation of hydroxymethylpyrimidine phosphate (HMP-P) to HMP-PP, and of HMP to HMP-P. This chain is Putative hydroxymethylpyrimidine/phosphomethylpyrimidine kinase C18B5.05c, found in Schizosaccharomyces pombe (strain 972 / ATCC 24843) (Fission yeast).